The sequence spans 260 residues: Hydroxyethylthiazole kinase 1 (260 aa).

M39 is a substrate binding site. Residues R115 and T160 each contribute to the ATP site. Residue G187 coordinates substrate.

It belongs to the Thz kinase family. The cofactor is Mg(2+).

It catalyses the reaction 5-(2-hydroxyethyl)-4-methylthiazole + ATP = 4-methyl-5-(2-phosphooxyethyl)-thiazole + ADP + H(+). It participates in cofactor biosynthesis; thiamine diphosphate biosynthesis; 4-methyl-5-(2-phosphoethyl)-thiazole from 5-(2-hydroxyethyl)-4-methylthiazole: step 1/1. Catalyzes the phosphorylation of the hydroxyl group of 4-methyl-5-beta-hydroxyethylthiazole (THZ). The sequence is that of Hydroxyethylthiazole kinase 1 from Streptococcus pneumoniae (strain P1031).